The sequence spans 37 residues: Large ribosomal subunit protein bL36 (37 aa).

Belongs to the bacterial ribosomal protein bL36 family.

The sequence is that of Large ribosomal subunit protein bL36 from Persephonella marina (strain DSM 14350 / EX-H1).